The primary structure comprises 385 residues: S-adenosylmethionine synthase (385 aa).

His16 is a binding site for ATP. Asp18 lines the Mg(2+) pocket. K(+) is bound at residue Glu44. The L-methionine site is built by Glu57 and Gln100. The flexible loop stretch occupies residues 100-110 (QSPDINQGVDR). ATP contacts are provided by residues 164–166 (DGK), 230–231 (KF), Asp239, 245–246 (RK), Ala262, and Lys266. Position 239 (Asp239) interacts with L-methionine. Residue Lys270 participates in L-methionine binding.

This sequence belongs to the AdoMet synthase family. In terms of assembly, homotetramer; dimer of dimers. Requires Mg(2+) as cofactor. The cofactor is K(+).

The protein resides in the cytoplasm. It carries out the reaction L-methionine + ATP + H2O = S-adenosyl-L-methionine + phosphate + diphosphate. Its pathway is amino-acid biosynthesis; S-adenosyl-L-methionine biosynthesis; S-adenosyl-L-methionine from L-methionine: step 1/1. Catalyzes the formation of S-adenosylmethionine (AdoMet) from methionine and ATP. The overall synthetic reaction is composed of two sequential steps, AdoMet formation and the subsequent tripolyphosphate hydrolysis which occurs prior to release of AdoMet from the enzyme. This chain is S-adenosylmethionine synthase, found in Helicobacter pylori (strain P12).